The following is a 103-amino-acid chain: Large ribosomal subunit protein bL21 (103 aa).

This sequence belongs to the bacterial ribosomal protein bL21 family. As to quaternary structure, part of the 50S ribosomal subunit. Contacts protein L20.

This protein binds to 23S rRNA in the presence of protein L20. This is Large ribosomal subunit protein bL21 from Paraburkholderia phymatum (strain DSM 17167 / CIP 108236 / LMG 21445 / STM815) (Burkholderia phymatum).